A 136-amino-acid chain; its full sequence is Protein LpdD (136 aa).

This sequence belongs to the CinA family.

In terms of biological role, probably involved in tannin degradation, however the precise biochemical function in metabolism of gallate is unknown. In Lactiplantibacillus plantarum (strain ATCC BAA-793 / NCIMB 8826 / WCFS1) (Lactobacillus plantarum), this protein is Protein LpdD.